The following is a 185-amino-acid chain: Peptidyl-tRNA hydrolase (185 aa).

TRNA is bound at residue tyrosine 14. Histidine 19 (proton acceptor) is an active-site residue. Positions 64, 66, and 112 each coordinate tRNA.

This sequence belongs to the PTH family. As to quaternary structure, monomer.

It localises to the cytoplasm. It carries out the reaction an N-acyl-L-alpha-aminoacyl-tRNA + H2O = an N-acyl-L-amino acid + a tRNA + H(+). Its function is as follows. Hydrolyzes ribosome-free peptidyl-tRNAs (with 1 or more amino acids incorporated), which drop off the ribosome during protein synthesis, or as a result of ribosome stalling. Catalyzes the release of premature peptidyl moieties from peptidyl-tRNA molecules trapped in stalled 50S ribosomal subunits, and thus maintains levels of free tRNAs and 50S ribosomes. The protein is Peptidyl-tRNA hydrolase of Lactobacillus delbrueckii subsp. bulgaricus (strain ATCC 11842 / DSM 20081 / BCRC 10696 / JCM 1002 / NBRC 13953 / NCIMB 11778 / NCTC 12712 / WDCM 00102 / Lb 14).